A 277-amino-acid chain; its full sequence is Phosphatidylglycerol--prolipoprotein diacylglyceryl transferase (277 aa).

4 helical membrane-spanning segments follow: residues 18-38, 54-74, 91-111, and 115-135; these read IAIY…YFMA, DLLV…YVIF, EGGI…IVFA, and GLSF…GQAI. Arginine 137 contributes to the a 1,2-diacyl-sn-glycero-3-phospho-(1'-sn-glycerol) binding site. The next 3 helical transmembrane spans lie at 177 to 197, 205 to 225, and 236 to 256; these read QPTF…LLLL, GELF…IEGM, and LRTA…LWVY.

It belongs to the Lgt family.

It localises to the cell membrane. It catalyses the reaction L-cysteinyl-[prolipoprotein] + a 1,2-diacyl-sn-glycero-3-phospho-(1'-sn-glycerol) = an S-1,2-diacyl-sn-glyceryl-L-cysteinyl-[prolipoprotein] + sn-glycerol 1-phosphate + H(+). The protein operates within protein modification; lipoprotein biosynthesis (diacylglyceryl transfer). Catalyzes the transfer of the diacylglyceryl group from phosphatidylglycerol to the sulfhydryl group of the N-terminal cysteine of a prolipoprotein, the first step in the formation of mature lipoproteins. The protein is Phosphatidylglycerol--prolipoprotein diacylglyceryl transferase of Shouchella clausii (strain KSM-K16) (Alkalihalobacillus clausii).